The primary structure comprises 31 residues: Kappa-sparatoxin-Hv1c (31 aa).

Cystine bridges form between Cys-2/Cys-16, Cys-9/Cys-21, and Cys-15/Cys-25. Trp-31 is subject to Tryptophan amide.

In terms of tissue distribution, expressed by the venom gland.

It localises to the secreted. Its function is as follows. Blocks transient outward voltage-gated potassium channels in rat ventricular myocytes (thus prolonging action-potential duration) and rat Kv4.2/KCNA4 channels expressed in Xenopus oocytes. Is also a weak blocker of calcium channels in rat cerebellar granule cells. The chain is Kappa-sparatoxin-Hv1c from Heteropoda venatoria (Brown huntsman spider).